An 83-amino-acid chain; its full sequence is Small ribosomal subunit protein uS17 (83 aa).

This sequence belongs to the universal ribosomal protein uS17 family. As to quaternary structure, part of the 30S ribosomal subunit.

One of the primary rRNA binding proteins, it binds specifically to the 5'-end of 16S ribosomal RNA. The sequence is that of Small ribosomal subunit protein uS17 from Nitratiruptor sp. (strain SB155-2).